The chain runs to 279 residues: Energy-coupling factor transporter ATP-binding protein EcfA2 (279 aa).

An ABC transporter domain is found at 3–245 (IALENVNFIY…VVFMEEVQLG (243 aa)). 40-47 (GHTGSGKS) is an ATP binding site.

It belongs to the ABC transporter superfamily. Energy-coupling factor EcfA family. In terms of assembly, forms a stable energy-coupling factor (ECF) transporter complex composed of 2 membrane-embedded substrate-binding proteins (S component), 2 ATP-binding proteins (A component) and 2 transmembrane proteins (T component).

Its subcellular location is the cell membrane. Its function is as follows. ATP-binding (A) component of a common energy-coupling factor (ECF) ABC-transporter complex. Unlike classic ABC transporters this ECF transporter provides the energy necessary to transport a number of different substrates. The chain is Energy-coupling factor transporter ATP-binding protein EcfA2 from Streptococcus pneumoniae serotype 2 (strain D39 / NCTC 7466).